We begin with the raw amino-acid sequence, 554 residues long: 3-(3-hydroxy-phenyl)propionate/3-hydroxycinnamic acid hydroxylase (554 aa).

FAD contacts are provided by residues 17 to 46 (QVAI…VVEK) and 285 to 295 (FRIDRVLLAGD).

The protein belongs to the PheA/TfdB FAD monooxygenase family. The cofactor is FAD.

It catalyses the reaction 3-(3-hydroxyphenyl)propanoate + NADH + O2 + H(+) = 3-(2,3-dihydroxyphenyl)propanoate + NAD(+) + H2O. The enzyme catalyses (2E)-3-(3-hydroxyphenyl)prop-2-enoate + NADH + O2 + H(+) = (2E)-3-(2,3-dihydroxyphenyl)prop-2-enoate + NAD(+) + H2O. It participates in aromatic compound metabolism; 3-phenylpropanoate degradation. Its function is as follows. Catalyzes the insertion of one atom of molecular oxygen into position 2 of the phenyl ring of 3-(3-hydroxyphenyl)propionate (3-HPP) and hydroxycinnamic acid (3HCI). This is 3-(3-hydroxy-phenyl)propionate/3-hydroxycinnamic acid hydroxylase from Escherichia coli O81 (strain ED1a).